Here is a 203-residue protein sequence, read N- to C-terminus: Large ribosomal subunit protein bL25 (203 aa).

Belongs to the bacterial ribosomal protein bL25 family. CTC subfamily. In terms of assembly, part of the 50S ribosomal subunit; part of the 5S rRNA/L5/L18/L25 subcomplex. Contacts the 5S rRNA. Binds to the 5S rRNA independently of L5 and L18.

This is one of the proteins that binds to the 5S RNA in the ribosome where it forms part of the central protuberance. This is Large ribosomal subunit protein bL25 from Xanthobacter autotrophicus (strain ATCC BAA-1158 / Py2).